We begin with the raw amino-acid sequence, 226 residues long: Methylamine utilization ferredoxin-type protein MauM (226 aa).

4Fe-4S ferredoxin-type domains are found at residues 59–87 (PEPEFNAACIRCGLCVEACPLDILHLASW), 95–127 (TPYFVGRTDPCRMCPDIPCARACPTGALSPLLT), 136–172 (VAVLVGHETCLNYKGLTCSICVRVCPIIGEAISLKQI), and 180–211 (QIPTVDSSKCTGCGTCEKHCVLSEAAIRLLPR). 16 residues coordinate [4Fe-4S] cluster: C67, C70, C73, C77, C105, C108, C113, C117, C145, C153, C156, C160, C189, C192, C195, and C199.

It functions in the pathway one-carbon metabolism; methylamine degradation. Its function is as follows. Involved in electron transfer. The polypeptide is Methylamine utilization ferredoxin-type protein MauM (mauM) (Methylophilus methylotrophus (Bacterium W3A1)).